Consider the following 207-residue polypeptide: NADH-quinone oxidoreductase subunit A (207 aa).

3 helical membrane passes run 6 to 26, 62 to 82, and 87 to 107; these read LSAI…LVVP, LVAI…AYAV, and AGWL…IGLV.

Belongs to the complex I subunit 3 family. NDH-1 is composed of 14 different subunits. Subunits NuoA, H, J, K, L, M, N constitute the membrane sector of the complex.

The protein localises to the cell inner membrane. It catalyses the reaction a quinone + NADH + 5 H(+)(in) = a quinol + NAD(+) + 4 H(+)(out). NDH-1 shuttles electrons from NADH, via FMN and iron-sulfur (Fe-S) centers, to quinones in the respiratory chain. The immediate electron acceptor for the enzyme in this species is believed to be ubiquinone. Couples the redox reaction to proton translocation (for every two electrons transferred, four hydrogen ions are translocated across the cytoplasmic membrane), and thus conserves the redox energy in a proton gradient. This chain is NADH-quinone oxidoreductase subunit A, found in Psychrobacter cryohalolentis (strain ATCC BAA-1226 / DSM 17306 / VKM B-2378 / K5).